The primary structure comprises 250 residues: MGQKVHPVGIRLGVVKRHNANWYANPKQYAEYLLKDLQVREFLTKKLKNAMVSNILIERPSGAAKVTISTARPGIVIGKKGEDIEKLQRELTNIMGVPAQVSINEIDRPDLDARLVAEAIASQLEKRVMFRRAMKRAVQNTMRAGAKGIKVEVSGRLGGAEIARTEWYREGRVPLHTLRADIDYATMRAETTYGTIGVKVWIFRGEILGGMKQVMNPAPAEERPAKRGRGRGEGQERRGRRGDRAADKGE.

The KH type-2 domain occupies 39-107 (VREFLTKKLK…PAQVSINEID (69 aa)). Positions 215 to 250 (MNPAPAEERPAKRGRGRGEGQERRGRRGDRAADKGE) are disordered. A compositionally biased stretch (basic and acidic residues) spans 220–250 (AEERPAKRGRGRGEGQERRGRRGDRAADKGE).

This sequence belongs to the universal ribosomal protein uS3 family. As to quaternary structure, part of the 30S ribosomal subunit. Forms a tight complex with proteins S10 and S14.

Its function is as follows. Binds the lower part of the 30S subunit head. Binds mRNA in the 70S ribosome, positioning it for translation. This chain is Small ribosomal subunit protein uS3, found in Acinetobacter baumannii (strain SDF).